The primary structure comprises 219 residues: Epididymal secretory glutathione peroxidase (219 aa).

The first 21 residues, 1–21 (MTVQLGAFYLFPLFMAGFVQT), serve as a signal peptide directing secretion. Residue C71 is part of the active site.

This sequence belongs to the glutathione peroxidase family. As to quaternary structure, homotetramer. As to expression, proximal caput epididymis.

The protein resides in the secreted. It carries out the reaction 2 glutathione + H2O2 = glutathione disulfide + 2 H2O. May constitute a glutathione peroxidase-like protective system against peroxide damage in sperm membrane lipids. Since the purified porcine enzyme has very little activity towards hydrogen peroxide or organic hydroperoxides the protective effect is not likely to be exerted by its enzymatic activity. Instead, may protect sperm from premature acrosome reaction in the epididymis by binding to lipid peroxides, which might otherwise interact with phospholipase A2 and induce the acrosome reaction. The protein is Epididymal secretory glutathione peroxidase (GPX5) of Sus scrofa (Pig).